Reading from the N-terminus, the 371-residue chain is Putative glutamate--cysteine ligase 2 (371 aa).

The protein belongs to the glutamate--cysteine ligase type 2 family. YbdK subfamily.

The enzyme catalyses L-cysteine + L-glutamate + ATP = gamma-L-glutamyl-L-cysteine + ADP + phosphate + H(+). Its function is as follows. ATP-dependent carboxylate-amine ligase which exhibits weak glutamate--cysteine ligase activity. The polypeptide is Putative glutamate--cysteine ligase 2 (Cupriavidus taiwanensis (strain DSM 17343 / BCRC 17206 / CCUG 44338 / CIP 107171 / LMG 19424 / R1) (Ralstonia taiwanensis (strain LMG 19424))).